We begin with the raw amino-acid sequence, 218 residues long: Octanoyltransferase (218 aa).

Residues 32–218 (GEAAEAIWLL…LRTFPQHFPD (187 aa)) form the BPL/LPL catalytic domain. Substrate is bound by residues 71–78 (RGGQYTYH), 151–153 (AIG), and 164–166 (GLS). Cys-182 acts as the Acyl-thioester intermediate in catalysis.

Belongs to the LipB family.

It is found in the cytoplasm. It carries out the reaction octanoyl-[ACP] + L-lysyl-[protein] = N(6)-octanoyl-L-lysyl-[protein] + holo-[ACP] + H(+). The protein operates within protein modification; protein lipoylation via endogenous pathway; protein N(6)-(lipoyl)lysine from octanoyl-[acyl-carrier-protein]: step 1/2. Catalyzes the transfer of endogenously produced octanoic acid from octanoyl-acyl-carrier-protein onto the lipoyl domains of lipoate-dependent enzymes. Lipoyl-ACP can also act as a substrate although octanoyl-ACP is likely to be the physiological substrate. In Cereibacter sphaeroides (strain ATCC 17023 / DSM 158 / JCM 6121 / CCUG 31486 / LMG 2827 / NBRC 12203 / NCIMB 8253 / ATH 2.4.1.) (Rhodobacter sphaeroides), this protein is Octanoyltransferase.